The primary structure comprises 499 residues: Ribose import ATP-binding protein RbsA 1 (499 aa).

ABC transporter domains lie at leucine 5–isoleucine 240 and threonine 249–serine 494. Residue glycine 37–serine 44 participates in ATP binding.

This sequence belongs to the ABC transporter superfamily. Ribose importer (TC 3.A.1.2.1) family. The complex is composed of an ATP-binding protein (RbsA), two transmembrane proteins (RbsC) and a solute-binding protein (RbsB).

The protein localises to the cell membrane. The catalysed reaction is D-ribose(out) + ATP + H2O = D-ribose(in) + ADP + phosphate + H(+). Functionally, part of the ABC transporter complex RbsABC involved in ribose import. Responsible for energy coupling to the transport system. The polypeptide is Ribose import ATP-binding protein RbsA 1 (Rubrobacter xylanophilus (strain DSM 9941 / JCM 11954 / NBRC 16129 / PRD-1)).